Reading from the N-terminus, the 108-residue chain is Putative bolA-like protein K11H12.1 (108 aa).

Positions 89-108 (SKWDGQKQEDSPTCRGGFGK) are disordered.

It belongs to the BolA/IbaG family.

The protein is Putative bolA-like protein K11H12.1 of Caenorhabditis elegans.